The primary structure comprises 199 residues: IMP cyclohydrolase (199 aa).

Belongs to the archaeal IMP cyclohydrolase family.

The enzyme catalyses IMP + H2O = 5-formamido-1-(5-phospho-D-ribosyl)imidazole-4-carboxamide. The protein operates within purine metabolism; IMP biosynthesis via de novo pathway; IMP from 5-formamido-1-(5-phospho-D-ribosyl)imidazole-4-carboxamide: step 1/1. Functionally, catalyzes the cyclization of 5-formylamidoimidazole-4-carboxamide ribonucleotide to IMP. This Methanothrix thermoacetophila (strain DSM 6194 / JCM 14653 / NBRC 101360 / PT) (Methanosaeta thermophila) protein is IMP cyclohydrolase.